Consider the following 292-residue polypeptide: Undecaprenyl-diphosphatase (292 aa).

Transmembrane regions (helical) follow at residues 87 to 107 (MGWYVIIGSIPIGVAGLLFEE), 113 to 133 (FRDLRLTALTLIVFGVLLGMV), 190 to 210 (AFLLAMPAVFASGLYKLKDIG), 219 to 239 (ATIVGTLVAFAVGYAVIAWFM), and 250 to 270 (FVYYRIALGILILALVSFGVL).

Belongs to the UppP family.

Its subcellular location is the cell membrane. The enzyme catalyses di-trans,octa-cis-undecaprenyl diphosphate + H2O = di-trans,octa-cis-undecaprenyl phosphate + phosphate + H(+). Functionally, catalyzes the dephosphorylation of undecaprenyl diphosphate (UPP). Confers resistance to bacitracin. This chain is Undecaprenyl-diphosphatase, found in Thermobifida fusca (strain YX).